Consider the following 402-residue polypeptide: Chorismate synthase (402 aa).

The NADP(+) site is built by arginine 40 and arginine 46. FMN contacts are provided by residues 134–136 (RAS), 255–256 (QA), glycine 299, 314–318 (KPIAT), and arginine 340.

Belongs to the chorismate synthase family. In terms of assembly, homotetramer. The cofactor is FMNH2.

It carries out the reaction 5-O-(1-carboxyvinyl)-3-phosphoshikimate = chorismate + phosphate. It functions in the pathway metabolic intermediate biosynthesis; chorismate biosynthesis; chorismate from D-erythrose 4-phosphate and phosphoenolpyruvate: step 7/7. Functionally, catalyzes the anti-1,4-elimination of the C-3 phosphate and the C-6 proR hydrogen from 5-enolpyruvylshikimate-3-phosphate (EPSP) to yield chorismate, which is the branch point compound that serves as the starting substrate for the three terminal pathways of aromatic amino acid biosynthesis. This reaction introduces a second double bond into the aromatic ring system. The sequence is that of Chorismate synthase from Leifsonia xyli subsp. xyli (strain CTCB07).